Here is a 467-residue protein sequence, read N- to C-terminus: Abscisic acid 8'-hydroxylase 1 (467 aa).

The chain crosses the membrane as a helical span at residues 5 to 24 (ALFLTLFAGSLFLYFLRCLI). Cys-411 provides a ligand contact to heme.

It belongs to the cytochrome P450 family. Heme is required as a cofactor. In terms of tissue distribution, mainly expressed in flowers, siliques, roots and stems. Lower expression in rosette leaves and dry seeds. Expressed in vascular tissues of embryo during the seed development.

Its subcellular location is the membrane. The catalysed reaction is 2-cis-(+)-abscisate + reduced [NADPH--hemoprotein reductase] + O2 = (+)-8'-hydroxyabscisate + oxidized [NADPH--hemoprotein reductase] + H2O + H(+). Its pathway is plant hormone degradation; abscisic acid degradation. Involved in the oxidative degradation of abscisic acid. Plays an important role in determining abscisic acid levels in dry seeds and in the control of postgermination growth. This chain is Abscisic acid 8'-hydroxylase 1 (CYP707A1), found in Arabidopsis thaliana (Mouse-ear cress).